We begin with the raw amino-acid sequence, 210 residues long: LexA repressor (210 aa).

A DNA-binding region (H-T-H motif) is located at residues 30 to 50; it reads RVEIAREIGFKSPNAAEEHLK. Residues Ser127 and Lys164 each act as for autocatalytic cleavage activity in the active site.

It belongs to the peptidase S24 family. Homodimer.

It catalyses the reaction Hydrolysis of Ala-|-Gly bond in repressor LexA.. Functionally, represses a number of genes involved in the response to DNA damage (SOS response), including recA and lexA. In the presence of single-stranded DNA, RecA interacts with LexA causing an autocatalytic cleavage which disrupts the DNA-binding part of LexA, leading to derepression of the SOS regulon and eventually DNA repair. The chain is LexA repressor from Actinobacillus pleuropneumoniae serotype 7 (strain AP76).